The sequence spans 381 residues: Succinyl-diaminopimelate desuccinylase (381 aa).

Position 70 (His70) interacts with Zn(2+). Residue Asp72 is part of the active site. Asp103 contributes to the Zn(2+) binding site. Glu136 (proton acceptor) is an active-site residue. Residues Glu137, Glu165, and His354 each contribute to the Zn(2+) site.

The protein belongs to the peptidase M20A family. DapE subfamily. As to quaternary structure, homodimer. Zn(2+) is required as a cofactor. The cofactor is Co(2+).

It carries out the reaction N-succinyl-(2S,6S)-2,6-diaminopimelate + H2O = (2S,6S)-2,6-diaminopimelate + succinate. It participates in amino-acid biosynthesis; L-lysine biosynthesis via DAP pathway; LL-2,6-diaminopimelate from (S)-tetrahydrodipicolinate (succinylase route): step 3/3. Its function is as follows. Catalyzes the hydrolysis of N-succinyl-L,L-diaminopimelic acid (SDAP), forming succinate and LL-2,6-diaminopimelate (DAP), an intermediate involved in the bacterial biosynthesis of lysine and meso-diaminopimelic acid, an essential component of bacterial cell walls. The protein is Succinyl-diaminopimelate desuccinylase of Roseobacter denitrificans (strain ATCC 33942 / OCh 114) (Erythrobacter sp. (strain OCh 114)).